Here is a 91-residue protein sequence, read N- to C-terminus: Small ribosomal subunit protein uS15 (91 aa).

This sequence belongs to the universal ribosomal protein uS15 family. Part of the 30S ribosomal subunit. Forms a bridge to the 50S subunit in the 70S ribosome, contacting the 23S rRNA.

Functionally, one of the primary rRNA binding proteins, it binds directly to 16S rRNA where it helps nucleate assembly of the platform of the 30S subunit by binding and bridging several RNA helices of the 16S rRNA. In terms of biological role, forms an intersubunit bridge (bridge B4) with the 23S rRNA of the 50S subunit in the ribosome. The protein is Small ribosomal subunit protein uS15 of Legionella pneumophila (strain Paris).